A 369-amino-acid polypeptide reads, in one-letter code: Glutamate 5-kinase (369 aa).

K9 contacts ATP. Residues S49, D136, and N148 each coordinate substrate. Residues T168–D169 and T210–K216 contribute to the ATP site. The region spanning Q275 to W355 is the PUA domain.

The protein belongs to the glutamate 5-kinase family.

The protein localises to the cytoplasm. The enzyme catalyses L-glutamate + ATP = L-glutamyl 5-phosphate + ADP. Its pathway is amino-acid biosynthesis; L-proline biosynthesis; L-glutamate 5-semialdehyde from L-glutamate: step 1/2. Its function is as follows. Catalyzes the transfer of a phosphate group to glutamate to form L-glutamate 5-phosphate. The sequence is that of Glutamate 5-kinase from Streptococcus pneumoniae serotype 4 (strain ATCC BAA-334 / TIGR4).